The sequence spans 453 residues: UPF0210 protein Mbar_A3181 (453 aa).

The protein belongs to the UPF0210 family.

The protein is UPF0210 protein Mbar_A3181 of Methanosarcina barkeri (strain Fusaro / DSM 804).